The following is a 346-amino-acid chain: SUMO-activating enzyme subunit 1 (346 aa).

An N-acetylmethionine modification is found at Met-1. Val-2 carries the post-translational modification N-acetylvaline; in SUMO-activating enzyme subunit 1, N-terminally processed. A Phosphoserine modification is found at Ser-12. Residue Lys-198 is modified to N6-acetyllysine.

The protein belongs to the ubiquitin-activating E1 family. As to quaternary structure, heterodimer of SAE1 and UBA2/SAE2. The heterodimer corresponds to the two domains that are encoded on a single polypeptide chain in ubiquitin-activating enzyme E1. Interacts with UBE2I. As to expression, expression level increases during S phase and drops in G2 phase (at protein level).

Its subcellular location is the nucleus. Its pathway is protein modification; protein sumoylation. In terms of biological role, the heterodimer acts as an E1 ligase for SUMO1, SUMO2, SUMO3, and probably SUMO4. It mediates ATP-dependent activation of SUMO proteins followed by formation of a thioester bond between a SUMO protein and a conserved active site cysteine residue on UBA2/SAE2. This chain is SUMO-activating enzyme subunit 1 (SAE1), found in Homo sapiens (Human).